The chain runs to 386 residues: All-trans-retinol dehydrogenase [NAD(+)] ADH7 (386 aa).

C59 lines the Zn(2+) pocket. 60-64 (RTDDH) lines the NAD(+) pocket. Residues H80, C110, C113, C116, C124, and C186 each contribute to the Zn(2+) site. Residues 211–216 (GLGGVG), D235, K240, 281–283 (IGH), 304–306 (VGV), 329–331 (CVF), and R381 each bind NAD(+).

Belongs to the zinc-containing alcohol dehydrogenase family. Class-IV subfamily. In terms of assembly, homodimer. Zn(2+) serves as cofactor. As to expression, preferentially expressed in stomach.

The protein localises to the cytoplasm. It carries out the reaction a primary alcohol + NAD(+) = an aldehyde + NADH + H(+). The catalysed reaction is 10-hydroxydecanoate + NAD(+) = 10-oxodecanoate + NADH + H(+). The enzyme catalyses all-trans-retinol + NAD(+) = all-trans-retinal + NADH + H(+). It catalyses the reaction 9-cis-retinol + NAD(+) = 9-cis-retinal + NADH + H(+). It carries out the reaction all-trans-3,4-didehydroretinol + NAD(+) = all-trans-3,4-didehydroretinal + NADH + H(+). The catalysed reaction is all-trans-4-hydroxyretinol + NAD(+) = all-trans-4-hydroxyretinal + NADH + H(+). The enzyme catalyses all-trans-4-oxoretinol + NAD(+) = all-trans-4-oxoretinal + NADH + H(+). It catalyses the reaction 12-hydroxydodecanoate + NAD(+) = 12-oxododecanoate + NADH + H(+). It carries out the reaction 16-hydroxyhexadecanoate + NAD(+) = 16-oxohexadecanoate + NADH + H(+). The catalysed reaction is hexan-1-ol + NAD(+) = hexanal + NADH + H(+). The enzyme catalyses (E)-hex-2-en-1-ol + NAD(+) = (E)-hex-2-enal + NADH + H(+). It catalyses the reaction (E)-4-hydroxynon-2-en-1-ol + NAD(+) = (E)-4-hydroxynon-2-enal + NADH + H(+). Retinol oxidation is inhibited by the detergent Tween 80. Ethanol inhibits both all-trans-retinol and 9-cis-retinol oxidation. 13-cis-retinol is an effective competitive inhibitor of the 9-cis-retinol oxidation. All-trans-retinoic acid is a powerful inhibitor of all-trans-retinol oxidation. 13-cis-retinoic acid is a powerful inhibitor of all-trans-retinol oxidation. Cimetidine competitively inhibited ethanol oxidation. Its function is as follows. Catalyzes the NAD-dependent oxidation of all-trans-retinol, alcohol, and omega-hydroxy fatty acids and their derivatives. Oxidizes preferentially all trans-retinol, all-trans-4-hydroxyretinol, 9-cis-retinol, 2-hexenol, and long chain omega-hydroxy fatty acids such as juniperic acid. In vitro can also catalyze the NADH-dependent reduction of all-trans-retinal and aldehydes and their derivatives. Reduces preferentially all trans-retinal, all-trans-4-oxoretinal and hexanal. Catalyzes in the oxidative direction with higher efficiency. Therefore may participate in retinoid metabolism, fatty acid omega-oxidation, and elimination of cytotoxic aldehydes produced by lipid peroxidation. This Homo sapiens (Human) protein is All-trans-retinol dehydrogenase [NAD(+)] ADH7.